A 176-amino-acid polypeptide reads, in one-letter code: ATP-dependent protease subunit HslV (176 aa).

Thr-2 is an active-site residue. Positions 157, 160, and 163 each coordinate Na(+).

This sequence belongs to the peptidase T1B family. HslV subfamily. A double ring-shaped homohexamer of HslV is capped on each side by a ring-shaped HslU homohexamer. The assembly of the HslU/HslV complex is dependent on binding of ATP.

The protein resides in the cytoplasm. It catalyses the reaction ATP-dependent cleavage of peptide bonds with broad specificity.. Allosterically activated by HslU binding. In terms of biological role, protease subunit of a proteasome-like degradation complex believed to be a general protein degrading machinery. The polypeptide is ATP-dependent protease subunit HslV (Pseudomonas syringae pv. tomato (strain ATCC BAA-871 / DC3000)).